The chain runs to 53 residues: Conotoxin Bu27 (53 aa).

Residues 1–12 constitute a propeptide that is removed on maturation; the sequence is ASDGRNAVVHER. 4-hydroxyproline is present on P14. Residue E15 is modified to 4-carboxyglutamate. Residues T19 and T21 are each glycosylated (O-linked (HexNAc...) threonine). A 4-hydroxyproline mark is found at P29, P34, P35, P43, P44, and P48. Proline amide is present on P48. A propeptide spanning residues 49–53 is cleaved from the precursor; the sequence is GRRND.

This sequence belongs to the conotoxin A superfamily. Post-translationally, contains 3 disulfide bonds. As to expression, expressed by the venom duct.

It localises to the secreted. Its function is as follows. Probable neurotoxin with ion channel inhibitor activity. The protein is Conotoxin Bu27 of Conus bullatus (Bubble cone).